The primary structure comprises 56 residues: Small ribosomal subunit protein bS21 (56 aa).

Belongs to the bacterial ribosomal protein bS21 family.

The sequence is that of Small ribosomal subunit protein bS21 from Synechococcus sp. (strain RCC307).